Here is a 537-residue protein sequence, read N- to C-terminus: uncharacterized protein (537 aa).

The protein belongs to the RuBisCO large chain family. Type IV subfamily.

Functionally, unknown. Probably does not have RuBisCO activity. This is an uncharacterized protein from Symbiodinium sp. (Dinoflagellate).